The sequence spans 51 residues: Small polypeptide DEVIL 1 (51 aa).

The disordered stretch occupies residues 1 to 25 (MEMKRVMMSSAERSKEKKRSISRRL). Residues 16 to 25 (EKKRSISRRL) show a composition bias toward basic residues. The tract at residues 20–51 (SISRRLGKYMKEQKGRIYIIRRCMVMLLCSHD) is required for DVL/RTFL small polypeptide activity. A helical membrane pass occupies residues 28-44 (YMKEQKGRIYIIRRCMV).

Belongs to the DVL/RTFL small polypeptides family. Mostly expressed in leaves and, to a lower extent, in roots and stems.

Its subcellular location is the cell membrane. Small polypeptide acting as a regulatory molecule which coordinates cellular responses required for differentiation, growth and development, including leaves shape, pedicule elongation, inflorescence organization and fruit maturation, probably by restricting polar cell proliferation in lateral organs and coordinating socket cell recruitment and differentiation at trichome sites. In Arabidopsis thaliana (Mouse-ear cress), this protein is Small polypeptide DEVIL 1.